We begin with the raw amino-acid sequence, 520 residues long: Cytochrome P450 315a1, mitochondrial (520 aa).

Cysteine 466 contributes to the heme binding site.

It belongs to the cytochrome P450 family. Requires heme as cofactor. As to expression, complex coexpression pattern of dib (disembodied) and sad (shade) in the early embryo that restricts to the prothoracic gland cells of the developing ring gland during late embryogenesis. In larvae and adult, coexpression is seen in prothoracic gland and follicle cells of the ovary. In adults, coexpression is seen in the follicle cells, sad only is expressed in nurse cells.

It localises to the mitochondrion membrane. It carries out the reaction 2-deoxyecdysone + 2 reduced [adrenodoxin] + O2 + 2 H(+) = ecdysone + 2 oxidized [adrenodoxin] + H2O. The enzyme catalyses 2,22-dideoxyecdysone + 2 reduced [adrenodoxin] + O2 + 2 H(+) = 22-deoxyecdysone + 2 oxidized [adrenodoxin] + H2O. Its pathway is steroid biosynthesis; ecdysteroid biosynthesis. Its function is as follows. Required for CNS development: midline glial cells. Involved in the metabolism of insect hormones: responsible for ecdysteroid C2-hydroxylase activity. May be involved in the breakdown of synthetic insecticides. This is Cytochrome P450 315a1, mitochondrial from Drosophila melanogaster (Fruit fly).